We begin with the raw amino-acid sequence, 89 residues long: Small ribosomal subunit protein uS15 (89 aa).

Belongs to the universal ribosomal protein uS15 family. As to quaternary structure, part of the 30S ribosomal subunit. Forms a bridge to the 50S subunit in the 70S ribosome, contacting the 23S rRNA.

Its function is as follows. One of the primary rRNA binding proteins, it binds directly to 16S rRNA where it helps nucleate assembly of the platform of the 30S subunit by binding and bridging several RNA helices of the 16S rRNA. Functionally, forms an intersubunit bridge (bridge B4) with the 23S rRNA of the 50S subunit in the ribosome. In Chromobacterium violaceum (strain ATCC 12472 / DSM 30191 / JCM 1249 / CCUG 213 / NBRC 12614 / NCIMB 9131 / NCTC 9757 / MK), this protein is Small ribosomal subunit protein uS15.